The following is a 145-amino-acid chain: MGAFTEKQEALVSSSFEAFKANIPQYSVVFYTSILEKAPAAKDLFSFLSNGVDPSNPKLTGHAEKLFGLVRDSAGQLKANGTVVADAALGSIHAQKAITDPQFVVVKEALLKTIKEAVGDKWSDELSSAWEVAYDELAAAIKKAF.

Gly-2 is modified (N-acetylglycine). Residues 3-145 enclose the Globin domain; that stretch reads AFTEKQEALV…ELAAAIKKAF (143 aa). Tyr-26 and Tyr-31 each carry nitrated tyrosine. Ser-46 serves as a coordination point for heme b. Position 46 is a phosphoserine (Ser-46). O2 is bound at residue His-62. Lys-65, His-93, and Lys-96 together coordinate heme b. A Nitrated tyrosine modification is found at Tyr-134.

This sequence belongs to the plant globin family. Monomer. Nitrated mainly at Tyr-31 and, to a lower extent, at Tyr-26 and Tyr-134, in effective nodules and particularly in hypoxic conditions; this mechanism may play a protective role in the symbiosis by buffering toxic peroxynitrite NO(2)(-). Nitration level decrease during nodule senescence. In terms of processing, phosphorylation at Ser-46 disrupts the molecular environment of its porphyrin ring oxygen binding pocket, thus leading to a reduced oxygen consumption and to the delivery of oxygen O(2) to symbiosomes. As to expression, specifically expressed in root nodules, and barely in pods.

The protein resides in the cytoplasm. It localises to the cytosol. The protein localises to the nucleus. Functionally, leghemoglobin that reversibly binds oxygen O(2) through a pentacoordinated heme iron. In root nodules, facilitates the diffusion of oxygen to the bacteroids while preventing the bacterial nitrogenase from being inactivated by buffering dioxygen, nitric oxide and carbon monoxide, and promoting the formation of reactive oxygen species (ROS, e.g. H(2)O(2)). This role is essential for symbiotic nitrogen fixation (SNF). The protein is Leghemoglobin 4 of Glycine max (Soybean).